The primary structure comprises 217 residues: MSSLYYANTLFSKYPASSSVFATGAFPEQTSCAFASNPQRPGYGAGSGASFAASMQGLYPGGGGMAGQSAAGVYAAGYGLEPSSFNMHCAPFEQNLSGVCPGDSAKAAGAKEQRDSDLAAESNFRIYPWMRSSGTDRKRGRQTYTRYQTLELEKEFHYNRYLTRRRRIEIAHTLCLTERQIKIWFQNRRMKWKKENKTAGPGTTGQDRAEAEEEEEE.

The short motif at 126–131 is the Antp-type hexapeptide element; the sequence is IYPWMR. The segment at residues 137 to 196 is a DNA-binding region (homeobox); the sequence is RKRGRQTYTRYQTLELEKEFHYNRYLTRRRRIEIAHTLCLTERQIKIWFQNRRMKWKKEN. A disordered region spans residues 194 to 217; the sequence is KENKTAGPGTTGQDRAEAEEEEEE.

It belongs to the Antp homeobox family. Forms a DNA-binding heterodimer with transcription factor PBX1.

The protein resides in the nucleus. Functionally, sequence-specific transcription factor which is part of a developmental regulatory system that provides cells with specific positional identities on the anterior-posterior axis. The chain is Homeobox protein Hox-B7 (HOXB7) from Homo sapiens (Human).